The chain runs to 180 residues: Putative adenylate kinase (180 aa).

Gly-10, Gly-12, Lys-13, Thr-14, and Thr-15 together coordinate ATP. The interval 30–50 (NLRDFALEKGIGEVKGDELEV) is NMP. The LID stretch occupies residues 99–109 (ERGYSKDKIGE). Arg-100 and Lys-138 together coordinate ATP.

Belongs to the adenylate kinase family. AK6 subfamily. As to quaternary structure, interacts with uS11. Not a structural component of 40S pre-ribosomes, but transiently interacts with them by binding to uS11.

The enzyme catalyses AMP + ATP = 2 ADP. The catalysed reaction is ATP + H2O = ADP + phosphate + H(+). In terms of biological role, broad-specificity nucleoside monophosphate (NMP) kinase that catalyzes the reversible transfer of the terminal phosphate group between nucleoside triphosphates and monophosphates. Also has ATPase activity. Involved in the late maturation steps of the 30S ribosomal particles, specifically 16S rRNA maturation. While NMP activity is not required for ribosome maturation, ATPase activity is. Associates transiently with small ribosomal subunit protein uS11. ATP hydrolysis breaks the interaction with uS11. May temporarily remove uS11 from the ribosome to enable a conformational change of the ribosomal RNA that is needed for the final maturation step of the small ribosomal subunit. In Pyrococcus furiosus (strain ATCC 43587 / DSM 3638 / JCM 8422 / Vc1), this protein is Putative adenylate kinase.